The primary structure comprises 455 residues: F-box/FBD/LRR-repeat protein At3g51530 (455 aa).

The disordered stretch occupies residues M1–F26. An F-box domain is found at E29–E75. LRR repeat units lie at residues I80–V106, E155–S182, V183–R208, T227–S257, I277–L302, and T325–D351. Positions K370 to T417 constitute an FBD domain.

This chain is F-box/FBD/LRR-repeat protein At3g51530, found in Arabidopsis thaliana (Mouse-ear cress).